A 1094-amino-acid chain; its full sequence is MPRRSDLHRILVIGSGPIVIGQAAEFDYSGTQAIKALREEGYEVILVNSNPATIMTDPEFADRTYVEPVTPEFVEKVIAKERPDAVLPTMGGQTALNVALALHDSGVLAKYGCELIGANARAIRVAEDRKLFGEAMEKIGLRCPTGRTVTSLEEALSAVEETGFPAIIRPSFTLGGTGGGIAYNREEFETIVRRGLDLSPVHSVLIERSLLGWKEYELEVMRDCADNVVIVCSIENLDPMGVHTGDSITVAPAMTLTDREYQVMRDAAVAIIREIGVDAGGCNIQFAVNPTNGELIVIEMNPRVSRSSALASKATGFPIARIGAKLAVGYTLDEVPNDITKTTPASFEPVLDYVIVKCPRFAFEKFVSSDPGLTTQMKSVGESMAIGRTFKEAFQKALRALETGRSGWTIAERLQDDRLTEGSKEELRGALRRPTPERIFQLKRAMLLGMDTKELYEITAIDPWFLDQLRELIDAEQWYEKLTGVDAVSMRRMKRLGFSDRQLGALRGQSESDARAERWALGVRPSYKMIDTCAGEFPSSTPYLYGNYDEESEAATEGRKKVVILGSGPNRIGQGVEFDYCCVRAVLALREQGYETIMVNSNPETVSTDFDISDKLYFEPLSLEDVLEIVHREQPEGVIVQLGGQTPLKLTRPLEAAGVKILGTSPDAIDAAEDRRRFEAIARELGIEQPANGTATSVDEAVTIAQRIGFPVLVRPSYVLGGRAMEIVHDEVSLRDYFERAARVSEERPVLVDRFLEDAFEADVDALSDGTDVVIGAVMEHIESAGIHSGDSACILPPYLIPAAAVAQMKEHTIAFAKRLGVVGLINVQYAYKDGQVYVIEVNPRASRTAPFVSKAIGVSLPSVAARLMLGETLAEVGFTQEIIPPYISVKEAVFPFNKFREFDPVLGPEMRSTGEVMGIDDDFGAAFMKSQLAADNALPREGTVFFTVSDGDKPTAASLAGKFHSIGFSIMATSGTAAFFREQGIPVTSVLKVHEGRPHGVDKILNGEVQLLVNTPLGKHAQVDDEKLRQAAIANRLPYTTTLTAASAAFEAIAARRTREPVVRSLQEWHEILRAPGAVESATAGSTQPAGVA.

The carboxyphosphate synthetic domain stretch occupies residues M1–E402. Positions 129, 169, 175, 176, 208, 210, 215, 241, 242, 243, 285, and 299 each coordinate ATP. The ATP-grasp 1 domain maps to G133 to V328. Mg(2+) is bound by residues Q285, E299, and N301. Mn(2+)-binding residues include Q285, E299, and N301. Residues T403 to S552 are oligomerization domain. Positions E553–D936 are carbamoyl phosphate synthetic domain. Residues E679–L870 enclose the ATP-grasp 2 domain. Positions 715, 754, 756, 761, 786, 787, 788, 789, 829, and 841 each coordinate ATP. Mg(2+) is bound by residues Q829, E841, and N843. Q829, E841, and N843 together coordinate Mn(2+). Residues N937–P1077 form the MGS-like domain. The allosteric domain stretch occupies residues N937 to A1094.

This sequence belongs to the CarB family. In terms of assembly, composed of two chains; the small (or glutamine) chain promotes the hydrolysis of glutamine to ammonia, which is used by the large (or ammonia) chain to synthesize carbamoyl phosphate. Tetramer of heterodimers (alpha,beta)4. It depends on Mg(2+) as a cofactor. Mn(2+) serves as cofactor.

It carries out the reaction hydrogencarbonate + L-glutamine + 2 ATP + H2O = carbamoyl phosphate + L-glutamate + 2 ADP + phosphate + 2 H(+). The enzyme catalyses hydrogencarbonate + NH4(+) + 2 ATP = carbamoyl phosphate + 2 ADP + phosphate + 2 H(+). It functions in the pathway amino-acid biosynthesis; L-arginine biosynthesis; carbamoyl phosphate from bicarbonate: step 1/1. Its pathway is pyrimidine metabolism; UMP biosynthesis via de novo pathway; (S)-dihydroorotate from bicarbonate: step 1/3. In terms of biological role, large subunit of the glutamine-dependent carbamoyl phosphate synthetase (CPSase). CPSase catalyzes the formation of carbamoyl phosphate from the ammonia moiety of glutamine, carbonate, and phosphate donated by ATP, constituting the first step of 2 biosynthetic pathways, one leading to arginine and/or urea and the other to pyrimidine nucleotides. The large subunit (synthetase) binds the substrates ammonia (free or transferred from glutamine from the small subunit), hydrogencarbonate and ATP and carries out an ATP-coupled ligase reaction, activating hydrogencarbonate by forming carboxy phosphate which reacts with ammonia to form carbamoyl phosphate. This Gemmatimonas aurantiaca (strain DSM 14586 / JCM 11422 / NBRC 100505 / T-27) protein is Carbamoyl phosphate synthase large chain.